Reading from the N-terminus, the 669-residue chain is Glutamate--cysteine ligase (669 aa).

It belongs to the glutamate--cysteine ligase type 3 family. Heterodimer of a catalytic heavy chain and a regulatory light chain.

It catalyses the reaction L-cysteine + L-glutamate + ATP = gamma-L-glutamyl-L-cysteine + ADP + phosphate + H(+). Its pathway is sulfur metabolism; glutathione biosynthesis; glutathione from L-cysteine and L-glutamate: step 1/2. In terms of biological role, catalyzes the ATP-dependent ligation of L-glutamate and L-cysteine and participates in the first and rate-limiting step in glutathione biosynthesis. The protein is Glutamate--cysteine ligase (gcs1) of Schizosaccharomyces pombe (strain 972 / ATCC 24843) (Fission yeast).